The sequence spans 326 residues: Acetyl-coenzyme A carboxylase carboxyl transferase subunit alpha (326 aa).

The CoA carboxyltransferase C-terminal domain maps to 45-298 (LEARAMQLRE…KQVLLENLDE (254 aa)).

Belongs to the AccA family. Acetyl-CoA carboxylase is a heterohexamer composed of biotin carboxyl carrier protein (AccB), biotin carboxylase (AccC) and two subunits each of ACCase subunit alpha (AccA) and ACCase subunit beta (AccD).

The protein resides in the cytoplasm. It catalyses the reaction N(6)-carboxybiotinyl-L-lysyl-[protein] + acetyl-CoA = N(6)-biotinyl-L-lysyl-[protein] + malonyl-CoA. It participates in lipid metabolism; malonyl-CoA biosynthesis; malonyl-CoA from acetyl-CoA: step 1/1. In terms of biological role, component of the acetyl coenzyme A carboxylase (ACC) complex. First, biotin carboxylase catalyzes the carboxylation of biotin on its carrier protein (BCCP) and then the CO(2) group is transferred by the carboxyltransferase to acetyl-CoA to form malonyl-CoA. The chain is Acetyl-coenzyme A carboxylase carboxyl transferase subunit alpha from Nostoc punctiforme (strain ATCC 29133 / PCC 73102).